A 356-amino-acid chain; its full sequence is Alanine racemase, catabolic (356 aa).

Residue Lys-35 is the Proton acceptor; specific for D-alanine of the active site. Lys-35 carries the post-translational modification N6-(pyridoxal phosphate)lysine. Arg-130 contacts substrate. Residue Tyr-253 is the Proton acceptor; specific for L-alanine of the active site. Position 301 (Met-301) interacts with substrate.

It belongs to the alanine racemase family. In terms of assembly, monomer. It depends on pyridoxal 5'-phosphate as a cofactor.

It catalyses the reaction L-alanine = D-alanine. With respect to regulation, inactivated by D- and L-beta-fluoroalanine, D- and L-beta-chloroalanine, and O-acetyl-D-serine. Its function is as follows. Isomerizes L-alanine to D-alanine which is then oxidized to pyruvate by DadA. This Salmonella typhimurium (strain LT2 / SGSC1412 / ATCC 700720) protein is Alanine racemase, catabolic (dadX).